Reading from the N-terminus, the 95-residue chain is YcgL domain-containing protein Patl_2802 (95 aa).

The 85-residue stretch at 4 to 88 (LLCAVYKSSK…PEENLLKQHL (85 aa)) folds into the YcgL domain.

This is YcgL domain-containing protein Patl_2802 from Pseudoalteromonas atlantica (strain T6c / ATCC BAA-1087).